Here is a 259-residue protein sequence, read N- to C-terminus: Anti-Pycsar protein Apyc1 (259 aa).

Positions 21–233 (YNNSALVTFT…KQQNKIFLMH (213 aa)) are beta-lactamase-like. The Zn(2+) site is built by His-64, His-66, Asp-68, His-69, His-154, Asp-178, and His-233.

The protein belongs to the anti-Pycsar protein Apyc1 family. Homodimer. The cofactor is Zn(2+).

It carries out the reaction 3',5'-cyclic CMP + H2O = CMP + H(+). It catalyses the reaction 3',5'-cyclic UMP + H2O = UMP + H(+). Its function is as follows. Counteracts the host Pycsar antiviral defense system. Phosphodiesterase that enables metal-dependent hydrolysis of host cyclic nucleotide Pycsar defense signals such as cCMP and cUMP. The protein is Anti-Pycsar protein Apyc1 of Bacillus subtilis.